Reading from the N-terminus, the 526-residue chain is GMP synthase [glutamine-hydrolyzing] (526 aa).

The Glutamine amidotransferase type-1 domain occupies 3 to 199 (KVAIIDFGSQ…FIKIAGCKTD (197 aa)). Cys-83 serves as the catalytic Nucleophile. Catalysis depends on residues His-174 and Glu-176. Residues 200-392 (WTMNSFLDEQ…LGISDEILMR (193 aa)) form the GMPS ATP-PPase domain. Residue 227–233 (SGGVDSS) participates in ATP binding.

In terms of assembly, homodimer.

The catalysed reaction is XMP + L-glutamine + ATP + H2O = GMP + L-glutamate + AMP + diphosphate + 2 H(+). Its pathway is purine metabolism; GMP biosynthesis; GMP from XMP (L-Gln route): step 1/1. Catalyzes the synthesis of GMP from XMP. The chain is GMP synthase [glutamine-hydrolyzing] from Ehrlichia canis (strain Jake).